Reading from the N-terminus, the 571-residue chain is Putative phospholipase B-like 1 (571 aa).

The N-terminal stretch at 1–18 (MNWIFIFLAAAVAIGCEA) is a signal peptide. N-linked (GlcNAc...) asparagine glycosylation is found at asparagine 62, asparagine 149, asparagine 442, and asparagine 473.

The protein belongs to the phospholipase B-like family.

The protein localises to the lysosome. In terms of biological role, putative phospholipase. In Caenorhabditis elegans, this protein is Putative phospholipase B-like 1.